We begin with the raw amino-acid sequence, 191 residues long: Small ribosomal subunit protein uS4A (191 aa).

Serine 50 and serine 161 each carry phosphoserine. An S4 RNA-binding domain is found at 107 to 181; it reads RRLQTQVFKL…CKRKRLRSQE (75 aa). Position 164 is a phosphotyrosine (tyrosine 164). The tract at residues 166–191 is disordered; sequence GGRPGRCKRKRLRSQEGGEGEEAEEE. The residue at position 179 (serine 179) is a Phosphoserine.

This sequence belongs to the universal ribosomal protein uS4 family. As to quaternary structure, component of the small ribosomal subunit (SSU). Mature yeast ribosomes consist of a small (40S) and a large (60S) subunit. The 40S small subunit contains 1 molecule of ribosomal RNA (18S rRNA) and at least 33 different proteins. The large 60S subunit contains 3 rRNA molecules (25S, 5.8S and 5S rRNA) and at least 46 different proteins. Interacts with snoRNA U3. uS11 interacts with MPP10. Component of the ribosomal small subunit (SSU) processome composed of at least 40 protein subunits and snoRNA U3.

Its subcellular location is the cytoplasm. Component of the ribosome, a large ribonucleoprotein complex responsible for the synthesis of proteins in the cell. The small ribosomal subunit (SSU) binds messenger RNAs (mRNAs) and translates the encoded message by selecting cognate aminoacyl-transfer RNA (tRNA) molecules. The large subunit (LSU) contains the ribosomal catalytic site termed the peptidyl transferase center (PTC), which catalyzes the formation of peptide bonds, thereby polymerizing the amino acids delivered by tRNAs into a polypeptide chain. The nascent polypeptides leave the ribosome through a tunnel in the LSU and interact with protein factors that function in enzymatic processing, targeting, and the membrane insertion of nascent chains at the exit of the ribosomal tunnel. uS4 is involved in nucleolar processing of pre-18S ribosomal RNA and ribosome assembly. In Schizosaccharomyces pombe (strain 972 / ATCC 24843) (Fission yeast), this protein is Small ribosomal subunit protein uS4A (rps901).